A 308-amino-acid polypeptide reads, in one-letter code: tRNA dimethylallyltransferase (308 aa).

14-21 (GPTASGKT) is an ATP binding site. 16–21 (TASGKT) serves as a coordination point for substrate. Interaction with substrate tRNA stretches follow at residues 39–42 (DSAL), 163–167 (QRLSR), and 244–249 (RCVGYR).

It belongs to the IPP transferase family. Monomer. It depends on Mg(2+) as a cofactor.

The enzyme catalyses adenosine(37) in tRNA + dimethylallyl diphosphate = N(6)-dimethylallyladenosine(37) in tRNA + diphosphate. Functionally, catalyzes the transfer of a dimethylallyl group onto the adenine at position 37 in tRNAs that read codons beginning with uridine, leading to the formation of N6-(dimethylallyl)adenosine (i(6)A). This is tRNA dimethylallyltransferase from Shewanella loihica (strain ATCC BAA-1088 / PV-4).